Consider the following 105-residue polypeptide: Large ribosomal subunit protein eL36 (105 aa).

Residues 9-31 (VGLNKGHKVTKNVSKPRHSRRRR) form a disordered region. The segment covering 13–31 (KGHKVTKNVSKPRHSRRRR) has biased composition (basic residues). Position 62 is an N6-acetyllysine (Lys62).

This sequence belongs to the eukaryotic ribosomal protein eL36 family. As to quaternary structure, component of the large ribosomal subunit.

Its subcellular location is the cytoplasm. The protein resides in the cytosol. Functionally, component of the large ribosomal subunit. The ribosome is a large ribonucleoprotein complex responsible for the synthesis of proteins in the cell. In Oryctolagus cuniculus (Rabbit), this protein is Large ribosomal subunit protein eL36 (RPL36).